Reading from the N-terminus, the 796-residue chain is MNIQHKEDTLIVQTGGNYKYYSVPVCVDSIDLTTEIARSEEKLLTGPSKHVEDPSYIESLFKNLYLNAPEYLKCQERCFLILKRLLLGPTSVPCAVETWDKMDYMNENPITTQNGTLYVYKKCCKCPNNCLFNCTVLTNYGTSHVFRGLLSLKKWETDTEPMICFCNRAVPNSEYIAVIFPGEQKITLDMYPHLLNILTRYISICDIDTITNDLIIELGSSLTNRICIHYKFLFNYAYIAKDSFTFVPDMDKEVILLELNKLIMTVECCTNFFFEKIWKRLSGDYDKYVTLLTLDASACPIIQTGTMREIKHLAAMLNVGLSYGKQKILKCSLQFQKRFIGFSEDDVIWRNLFLIYFNVNYPHHEETSPVKVPVQSSVKYHILLQRLLKNKRADEHETIVDRFVCGGMLNKRSTESYGTWDRNVETSVPDEFNEVVTIRDDAFCVNAFNTNRVINVRSINKKHVTTAPSCLTFNFVTDKYIFKEPACTISTFGTSGNTLQSLNINMKGSYVEFIYMLNVYRLHTNTFKFLLPATVCNSNSSLDIHGLLNQEVMRSDRNAVFWTTNFPCMITNINKINMGWFKAATAIVPKVHGDELRTVIKKEINFLKTSPSVNFDPFLHNMFVELELRNRCQIPLMNKQLVLTLYICLCMSNKCEISGIQKYLMTLVSEGVFDYSKNMLAHTKVKHVCAIAGSRVCNNVPKILHNKKKVKLDSFGRNANLLTFFGHLNVNELTDRQLSTIVKILIFYVQNIKHRGGICLLKRIIRKFLNSRVNKKLNGYDCRNNSTNNEHCRYPT.

This sequence belongs to the herpesviridae UL87 family.

This chain is Protein U58, found in Elephas maximus (Indian elephant).